A 480-amino-acid chain; its full sequence is Probable glycosyltransferase 2 (480 aa).

Over residues 1 to 21 (MGQEGMGYNNGKGGGGGGGGL) the composition is skewed to gly residues. Residues 1-45 (MGQEGMGYNNGKGGGGGGGGLPMTAPRPRGASPLSSHGHHHRSRK) form a disordered region. The Cytoplasmic portion of the chain corresponds to 1-49 (MGQEGMGYNNGKGGGGGGGGLPMTAPRPRGASPLSSHGHHHRSRKIHRT). The helical; Signal-anchor for type II membrane protein transmembrane segment at 50 to 72 (FNNVKITVLCGLVTILVLRGTIG) threads the bilayer. Topologically, residues 73 to 480 (LNLSLPNQPT…DVKAKISTTS (408 aa)) are lumenal. N-linked (GlcNAc...) asparagine glycans are attached at residues asparagine 74, asparagine 124, asparagine 129, and asparagine 458.

The protein belongs to the glycosyltransferase 34 family.

Its subcellular location is the golgi apparatus membrane. In terms of biological role, probable glycosyltransferase that may be involved in the biosynthesis of xyloglucan. This Oryza sativa subsp. indica (Rice) protein is Probable glycosyltransferase 2.